The chain runs to 204 residues: Serotype 3 fimbrial subunit (204 aa).

The signal sequence occupies residues 1-25 (MSKFSYPALRAALILAASPVLPALA). Cys41 and Cys84 are joined by a disulfide.

Belongs to the fimbrial protein family.

It localises to the fimbrium. Bordetella pertussis is the causative agent of whooping cough. An essential step in the disease process is the attachment of the bacteria to the ciliated epithelium of the respiratory tract, enabling the organism to resist normal host-clearance mechanisms. It is unclear which bacterial cell surface component are responsible for adherence but the fimbriae of B.pertussis are prime candidates for being involved in this process. This Bordetella pertussis (strain Tohama I / ATCC BAA-589 / NCTC 13251) protein is Serotype 3 fimbrial subunit (fim3).